Reading from the N-terminus, the 216-residue chain is Transmembrane emp24 domain-containing protein eca (216 aa).

The first 20 residues, 1–20 (MRDQFISLALILCVLHSACG), serve as a signal peptide directing secretion. At 21 to 182 (LYFHISETER…FRHTSESTNS (162 aa)) the chain is on the lumenal side. Residues 30 to 126 (RKCFIEEVPD…QLRVHLDIQV (97 aa)) enclose the GOLD domain. Residues 134–164 (ANVAQKEKLTELQLRIRQLLDQVEQITKEQN) are a coiled coil. A helical transmembrane segment spans residues 183-203 (RVLWWSLAQTIVLVCMGFWQM). Over 204–216 (RHLKSFFEAKKLV) the chain is Cytoplasmic. A Prevents secretion from ER motif is present at residues 213 to 216 (KKLV).

The protein belongs to the EMP24/GP25L family.

Its subcellular location is the endoplasmic reticulum membrane. In terms of biological role, eca and bai are essential, though not redundant, for dorsoventral patterning of the embryo. Specifically required during early embryogenesis for the activity of maternal tkv, while the zygotic tkv is not affected. Involved in Golgi organization. This Drosophila sechellia (Fruit fly) protein is Transmembrane emp24 domain-containing protein eca.